A 143-amino-acid polypeptide reads, in one-letter code: Transcriptional regulator MraZ (143 aa).

SpoVT-AbrB domains are found at residues 5–47 and 76–119; these read EYQH…PQEE and ASEC…SKSE.

The protein belongs to the MraZ family. In terms of assembly, forms oligomers.

The protein resides in the cytoplasm. Its subcellular location is the nucleoid. The protein is Transcriptional regulator MraZ of Listeria monocytogenes serotype 4b (strain CLIP80459).